Consider the following 592-residue polypeptide: Inactive heparanase-2 (592 aa).

The N-terminal stretch at 1–41 (MRVLCAFPEAMPSSNSRPPACLAPGALYLALLLHLSLSSQA) is a signal peptide. N-linked (GlcNAc...) asparagine glycosylation is found at Asn-254 and Asn-392.

Belongs to the glycosyl hydrolase 79 family. As to quaternary structure, interacts with HPSE. Interacts with SDC1 (via glycan chains). As to expression, widely expressed, with the highest expression in brain, mammary gland, prostate, small intestine, testis and uterus. In the central nervous system, expressed in the spinal cord, caudate nucleus, thalamus, substantia nigra, medulla oblongata, putamen and pons. In the urinary bladder, expressed in longitudinal and circular layers of detrusor muscle. Found both in normal and cancer tissues.

It localises to the secreted. Its subcellular location is the extracellular space. The protein localises to the extracellular matrix. Functionally, binds heparin and heparan sulfate with high affinity, but lacks heparanase activity. Inhibits HPSE, possibly by competing for its substrates (in vitro). This is Inactive heparanase-2 (HPSE2) from Homo sapiens (Human).